Here is a 352-residue protein sequence, read N- to C-terminus: C-C chemokine receptor type 5 (352 aa).

Topologically, residues 1 to 30 (MDYQVSSPTYDIDYYTSEPCQKVNVKQIAA) are extracellular. Residue Y3 is modified to Sulfotyrosine. O-linked (GalNAc...) serine glycans are attached at residues S6 and S7. Sulfotyrosine is present on residues Y10, Y14, and Y15. 2 disulfides stabilise this stretch: C20–C269 and C101–C178. The helical transmembrane segment at 31 to 58 (RLLPPLYSLVFIFGFVGNILVVLILINC) threads the bilayer. Residues 59 to 68 (KRLKSMTDIY) lie on the Cytoplasmic side of the membrane. Residues 69–89 (LLNLAISDLFFLLTVPFWAHY) traverse the membrane as a helical segment. Over 90–102 (AAAQWDFGNTMCQ) the chain is Extracellular. A helical transmembrane segment spans residues 103-124 (LLTGLYFIGFFSGIFFIILLTI). At 125 to 141 (DRYLAIVHAVFALKART) the chain is on the cytoplasmic side. The chain crosses the membrane as a helical span at residues 142–166 (VTFGVVTSVITWVVAVFASLPGIIF). The Extracellular segment spans residues 167-198 (TRSQREGLHYTCSSHFPYSQYQFWKNFQTLKI). The helical transmembrane segment at 199–218 (VILGLVLPLLVMVICYSGIL) threads the bilayer. At 219 to 235 (KTLLRCRNEKKRHRAVR) the chain is on the cytoplasmic side. The helical transmembrane segment at 236–260 (LIFTIMIVYFLFWAPYNIVLLLNTF) threads the bilayer. Topologically, residues 261–277 (QEFFGLNNCSSSNRLDQ) are extracellular. A helical membrane pass occupies residues 278-301 (AMQVTETLGMTHCCINPIIYAFVG). Over 302–352 (EKFRNYLLVFFQKHIAKRFCKCCYIFQQEAPERASSVYTRSTGEQEISVGL) the chain is Cytoplasmic. S-palmitoyl cysteine attachment occurs at residues C321, C323, and C324. Phosphoserine; by BARK1 occurs at positions 336, 337, 342, and 349.

The protein belongs to the G-protein coupled receptor 1 family. In terms of assembly, interacts with PRAF2. Efficient ligand binding to CCL3/MIP-1alpha and CCL4/MIP-1beta requires sulfation, O-glycosylation and sialic acid modifications. Glycosylation on Ser-6 is required for efficient binding of CCL4. Interacts with GRK2. Interacts with ARRB1 and ARRB2. Interacts with CNIH4. Interacts with S100A4; this interaction stimulates T-lymphocyte chemotaxis. Post-translationally, sulfated on at least 2 of the N-terminal tyrosines. Sulfation is required for efficient binding of the chemokines, CCL3 and CCL4. Palmitoylation in the C-terminal is important for cell surface expression. In terms of processing, phosphorylation on serine residues in the C-terminal is stimulated by binding CC chemokines especially by APO-RANTES. Post-translationally, O-glycosylated, but not N-glycosylated. Ser-6 appears to be the major site even if Ser-7 may be also O-glycosylated. Also sialylated glycans present which contribute to chemokine binding. Thr-16 and Ser-17 may also be glycosylated and, if so, with small moieties such as a T-antigen.

It is found in the cell membrane. Functionally, receptor for a number of inflammatory CC-chemokines including CCL3/MIP-1-alpha, CCL4/MIP-1-beta and RANTES and subsequently transduces a signal by increasing the intracellular calcium ion level. May play a role in the control of granulocytic lineage proliferation or differentiation. Participates in T-lymphocyte migration to the infection site by acting as a chemotactic receptor. This Rhinopithecus bieti (Black snub-nosed monkey) protein is C-C chemokine receptor type 5 (CCR5).